Consider the following 152-residue polypeptide: Deoxyuridine 5'-triphosphate nucleotidohydrolase (152 aa).

Residues 71-73, Asn84, 88-90, and Met98 each bind substrate; these read RSG and LID.

Belongs to the dUTPase family. Mg(2+) is required as a cofactor.

It catalyses the reaction dUTP + H2O = dUMP + diphosphate + H(+). The protein operates within pyrimidine metabolism; dUMP biosynthesis; dUMP from dCTP (dUTP route): step 2/2. Functionally, this enzyme is involved in nucleotide metabolism: it produces dUMP, the immediate precursor of thymidine nucleotides and it decreases the intracellular concentration of dUTP so that uracil cannot be incorporated into DNA. The chain is Deoxyuridine 5'-triphosphate nucleotidohydrolase from Shewanella woodyi (strain ATCC 51908 / MS32).